A 272-amino-acid chain; its full sequence is Insertion element IS600 uncharacterized 31 kDa protein (272 aa).

An Integrase catalytic domain is found at 105 to 268; sequence APTAPNQVWV…SPAAFREKYH (164 aa).

In Shigella sonnei, this protein is Insertion element IS600 uncharacterized 31 kDa protein.